A 316-amino-acid polypeptide reads, in one-letter code: KRR1 small subunit processome component (316 aa).

Residues 122–192 (ACDVIKIGNF…VRRVVEDCMK (71 aa)) enclose the KH domain. Residues 279-304 (KKLNEQKEKQMEREIERQEERAKDFI) are compositionally biased toward basic and acidic residues. The disordered stretch occupies residues 279–316 (KKLNEQKEKQMEREIERQEERAKDFIAPEEEAYKPNQN).

The protein belongs to the KRR1 family. As to quaternary structure, component of the ribosomal small subunit (SSU) processome composed of at least 40 protein subunits and snoRNA U3. Interacts with snoRNA U3. Interacts with MPP10, KRI1 and with ribosomal proteins RPS1A, RPS4A, RPS4B, RPS8A, RPS8B, RPS11A, RPS11B, RPS13, RPS24, RPS25, RPL4A, RPL7B, RPL8, RPL23, RPL25 and RPL28.

The protein localises to the nucleus. It localises to the nucleolus. Its function is as follows. Required for 40S ribosome biogenesis. Involved in nucleolar processing of pre-18S ribosomal RNA and ribosome assembly. Essential for vegetative growth. The chain is KRR1 small subunit processome component from Saccharomyces cerevisiae (strain RM11-1a) (Baker's yeast).